Reading from the N-terminus, the 303-residue chain is Probable aspartoacylase (303 aa).

His13 and Glu16 together coordinate Zn(2+). Substrate is bound by residues Arg55 and 62 to 63; that span reads NR. Position 104 (His104) interacts with Zn(2+). Substrate contacts are provided by Glu162 and Tyr273.

Belongs to the AspA/AstE family. Aspartoacylase subfamily. The cofactor is Zn(2+).

The enzyme catalyses an N-acyl-L-aspartate + H2O = a carboxylate + L-aspartate. The sequence is that of Probable aspartoacylase from Parasynechococcus marenigrum (strain WH8102).